We begin with the raw amino-acid sequence, 533 residues long: MKVSTIFAAASALFAATTTLAQDVACLVDNQQVAVVDLDTGVCPFTIPASLAAFFTFVSLEEYNVQFYYTIVNNVRYNTDIRNAGKVINVPARNLYGAGAVPFFQVHLEKQLEANSTAAIRRRLMGETPIVKRDQIDDFIASIENTEGTALEGSTLEVVDYVPGSSSASPSGSASPSGSESGSGSDSATIRSTTVVSSSSCESSGDSAATATGANGESTVTEQNTVVVTITSCHNDACHATTVPATASIGVTTVHGTETIFTTYCPLSSYETVESTKVITITSCSENKCQETTVEATPSTATTVSEGVVTEYVTYCPVSSVETVASTKVITVVACDEHKCHETTAVATPTEVTTVVEGSTTHYVTYKPTGSGPTQGETYATNAITSEGTVYVPKTTAVTTHGSTFETVAYITVTKATPTKGGEQHQPGSPAGAATSAPGAPAPGASGAHASTANKVTVEAQATPGTLTPENTVAGGVNGEQVAVSAKTTISQTTVAKASGSGKAAISTFEGAAAASAGASVLALALIPLAYFI.

The signal sequence occupies residues 1–21 (MKVSTIFAAASALFAATTTLA). N-linked (GlcNAc...) asparagine glycosylation is present at Asn115. Disordered regions lie at residues 161–219 (YVPG…GEST) and 418–451 (PTKG…AHAS). Low complexity-rich tracts occupy residues 163–214 (PGSS…ATGA) and 427–451 (PGSP…AHAS). Gly511 carries GPI-anchor amidated glycine lipidation. Positions 512 to 533 (AAAASAGASVLALALIPLAYFI) are cleaved as a propeptide — removed in mature form.

This sequence belongs to the flocculin family. The GPI-anchor is attached to the protein in the endoplasmic reticulum and serves to target the protein to the cell surface. There, the glucosamine-inositol phospholipid moiety is cleaved off and the GPI-modified mannoprotein is covalently attached via its lipidless GPI glycan remnant to the 1,6-beta-glucan of the outer cell wall layer. Post-translationally, cleaved by SAP9 and SAP10, which leads to its release from the cell wall. In terms of processing, N-glycosylated.

Its subcellular location is the secreted. It is found in the cell wall. It localises to the membrane. Its function is as follows. Cell wall protein which plays an anti-adhesive role and promotes dispersal of yeast forms, which allows the organism to seek new sites for colonization. This chain is Yeast-form wall Protein 1 (YWP1), found in Candida albicans (strain SC5314 / ATCC MYA-2876) (Yeast).